The primary structure comprises 272 residues: Undecaprenyl-diphosphatase (272 aa).

A run of 8 helical transmembrane segments spans residues 2-22 (LELIKAIFLGIVEGITEWLPI), 50-70 (VIQLGAIMAVVVLYWNKLFPF), 83-103 (FSLWIKVLAATLPAALIGVPF), 110-130 (LFYNYITVAITLIVYGVLFII), 148-168 (LGYKAVLLIGAFQVLALIPGT), 195-215 (LAIPVMFGASLLKLVKFGFAF), 220-240 (LIILLTGMIVAFAVSIFAIKF), and 250-270 (FKAFGYYRIILGLIVVLYFLA).

This sequence belongs to the UppP family.

It is found in the cell membrane. It carries out the reaction di-trans,octa-cis-undecaprenyl diphosphate + H2O = di-trans,octa-cis-undecaprenyl phosphate + phosphate + H(+). Its function is as follows. Catalyzes the dephosphorylation of undecaprenyl diphosphate (UPP). Confers resistance to bacitracin. The chain is Undecaprenyl-diphosphatase from Acetivibrio thermocellus (strain ATCC 27405 / DSM 1237 / JCM 9322 / NBRC 103400 / NCIMB 10682 / NRRL B-4536 / VPI 7372) (Clostridium thermocellum).